A 651-amino-acid polypeptide reads, in one-letter code: Beta-glucuronidase (651 aa).

Residues 1 to 22 (MARGSAVAWAAFGPLLWGCALG) form the signal peptide. N-linked (GlcNAc...) asparagine glycosylation is found at Asn-173, Asn-190, Asn-272, and Asn-420. The active-site Proton donor is the Glu-451. N-linked (GlcNAc...) asparagine glycosylation occurs at Asn-631.

Belongs to the glycosyl hydrolase 2 family. In terms of assembly, homotetramer.

The protein resides in the lysosome. It catalyses the reaction a beta-D-glucuronoside + H2O = D-glucuronate + an alcohol. Its activity is regulated as follows. Inhibited by L-aspartic acid. Plays an important role in the degradation of dermatan and keratan sulfates. In Pongo abelii (Sumatran orangutan), this protein is Beta-glucuronidase (GUSB).